Here is a 478-residue protein sequence, read N- to C-terminus: Putative response regulator NtrX-like (478 aa).

Residues 5–121 form the Response regulatory domain; the sequence is DVLIVDDEED…KLVILLKRAC (117 aa). 4-aspartylphosphate is present on aspartate 54. Positions 143-372 constitute a Sigma-54 factor interaction domain; that stretch reads LVGNSTITLK…LRNVVEWTLI (230 aa). Residues 171–178 and 235–244 each bind ATP; these read GKVGSGKE and ANNGTLYIDE.

Its function is as follows. Member of the two-component regulatory system RBE_0312/RBE_0470. The polypeptide is Putative response regulator NtrX-like (Rickettsia bellii (strain RML369-C)).